The sequence spans 317 residues: 2,3-dihydroxyphenylpropionate/2,3-dihydroxicinnamic acid 1,2-dioxygenase (317 aa).

The active-site Proton donor is the H115. The active-site Proton acceptor is the H179.

Belongs to the LigB/MhpB extradiol dioxygenase family. As to quaternary structure, homotetramer. Fe(2+) serves as cofactor.

It catalyses the reaction 3-(2,3-dihydroxyphenyl)propanoate + O2 = (2Z,4E)-2-hydroxy-6-oxonona-2,4-dienedioate + H(+). The catalysed reaction is (2E)-3-(2,3-dihydroxyphenyl)prop-2-enoate + O2 = (2Z,4E,7E)-2-hydroxy-6-oxonona-2,4,7-trienedioate + H(+). It functions in the pathway aromatic compound metabolism; 3-phenylpropanoate degradation. Catalyzes the non-heme iron(II)-dependent oxidative cleavage of 2,3-dihydroxyphenylpropionic acid and 2,3-dihydroxicinnamic acid into 2-hydroxy-6-ketononadienedioate and 2-hydroxy-6-ketononatrienedioate, respectively. This Paraburkholderia phymatum (strain DSM 17167 / CIP 108236 / LMG 21445 / STM815) (Burkholderia phymatum) protein is 2,3-dihydroxyphenylpropionate/2,3-dihydroxicinnamic acid 1,2-dioxygenase.